Reading from the N-terminus, the 227-residue chain is Hydroxylase/desaturase asaB (227 aa).

The protein belongs to the asaB hydroxylase/desaturase family.

It participates in secondary metabolite biosynthesis. In terms of biological role, hydroxylase/desaturase; part of the gene cluster that mediates the biosynthesis of aspergillic acid, a hydroxamic acid-containing pyrazinone with aliphatic side chains that originates from leucine (Leu) and isoleucine (Ile). Aspergillic acid has antibiotic properties and was shown to be lethal to mice. The first step in the pathway is the production of deoxyaspergillic acid via a condensation between the Ile amine and the Leu carboxylic acid, followed by a reductive release from the protein forming the dipeptide aldehyde NH(2)-Leu-Ile-CHO, which could undergo an intermolecular cyclization resulting in a dihydropyrazinone. As the NRPS asaC lacks a condensation domain, it is improbable that it is responsible for condensation of Leu and Ile. One possibility is that asaC acts on a previously condensed dipeptide and functions as a Leu-Ile reductase to yield deoxyaspergillic acid. After asaC forms deoxyaspergillic acid, the cytochrome P450 asaD oxidizes the pyrazinone to the hydroxamic acid-containing bioactive metabolite aspergillic acid. The hydroxylase/desaturase asaB can then convert aspergillic acid to hydroxyaspergillic acid. Both aspergillic acid and hydroxyaspergillic acid can form complexes with iron producing ferriaspergillin analogs. In Aspergillus flavus (strain ATCC 200026 / FGSC A1120 / IAM 13836 / NRRL 3357 / JCM 12722 / SRRC 167), this protein is Hydroxylase/desaturase asaB.